A 325-amino-acid polypeptide reads, in one-letter code: Glutarate 2-hydroxylase (325 aa).

Residues histidine 160, aspartate 162, and histidine 292 each contribute to the Fe cation site.

It belongs to the glutarate hydroxylase family. As to quaternary structure, homotetramer. It depends on Fe(2+) as a cofactor.

The enzyme catalyses glutarate + 2-oxoglutarate + O2 = (S)-2-hydroxyglutarate + succinate + CO2. It participates in amino-acid degradation. Functionally, acts as an alpha-ketoglutarate-dependent dioxygenase catalyzing hydroxylation of glutarate (GA) to L-2-hydroxyglutarate (L2HG). Functions in a L-lysine degradation pathway that proceeds via cadaverine, glutarate and L-2-hydroxyglutarate. This Escherichia coli (strain 55989 / EAEC) protein is Glutarate 2-hydroxylase.